Here is a 355-residue protein sequence, read N- to C-terminus: 6-aminohexanoate-oligomer endohydrolase (355 aa).

The active-site Nucleophile is the threonine 267.

The protein belongs to the peptidase S58 family. As to quaternary structure, heterotetramer composed of 4 alpha/beta heterodimers. Post-translationally, expressed as an inactive precursor that is cleaved autocatalytically at Asn266/Thr267 to generate an active enzyme composed of an alpha subunit and a beta subunit.

It catalyses the reaction [N-(6-aminohexanoyl)]n + H2O = [N-(6-aminohexanoyl)]n-x + [N-(6-aminohexanoyl)]x.. It functions in the pathway xenobiotic degradation; nylon-6 oligomer degradation. Involved in the degradation of nylon-6 oligomers. Degrades cyclic and linear oligomers of 6-aminohexanoate (Ahx) with a degree of polymerization greater than three by an endo-type mode. Cannot use Ahx cyclic dimer or the Ahx linear dimer. This chain is 6-aminohexanoate-oligomer endohydrolase, found in Kocuria sp. (strain KY2).